We begin with the raw amino-acid sequence, 832 residues long: Translation initiation factor IF-2 (832 aa).

The segment at 1-244 is disordered; it reads MSDTDGKKTL…KAMGGSQERE (244 aa). Polar residues predominate over residues 18-27; sequence TGQVKQSFSH. Basic and acidic residues predominate over residues 81–141; it reads KANESEEAER…EARKKAEADA (61 aa). Positions 142–171 are enriched in low complexity; the sequence is SSKPAAARSKADDPATMDPAAAQAAEARGA. Basic and acidic residues-rich tracts occupy residues 178–201 and 227–244; these read PRKE…DDRR and RKQE…QERE. Positions 329–497 constitute a tr-type G domain; that stretch reads PRPPVITVMG…SIALQAEILE (169 aa). Residues 338 to 345 form a G1 region; the sequence is GHVDHGKT. Residue 338–345 participates in GTP binding; the sequence is GHVDHGKT. Residues 363-367 are G2; the sequence is GITQH. Positions 385–388 are G3; it reads DTPG. Residues 385–389 and 439–442 each bind GTP; these read DTPGH and NKID. Residues 439-442 are G4; that stretch reads NKID. Residues 475-477 are G5; that stretch reads SAI.

Belongs to the TRAFAC class translation factor GTPase superfamily. Classic translation factor GTPase family. IF-2 subfamily.

It localises to the cytoplasm. In terms of biological role, one of the essential components for the initiation of protein synthesis. Protects formylmethionyl-tRNA from spontaneous hydrolysis and promotes its binding to the 30S ribosomal subunits. Also involved in the hydrolysis of GTP during the formation of the 70S ribosomal complex. The polypeptide is Translation initiation factor IF-2 (Dinoroseobacter shibae (strain DSM 16493 / NCIMB 14021 / DFL 12)).